Reading from the N-terminus, the 101-residue chain is Small ribosomal subunit protein uS14m (101 aa).

This sequence belongs to the universal ribosomal protein uS14 family. In terms of assembly, component of the mitochondrial ribosome small subunit (28S) which comprises a 12S rRNA and about 30 distinct proteins. Interacts with LIAT1.

Its subcellular location is the mitochondrion. The chain is Small ribosomal subunit protein uS14m (mrps14) from Dictyostelium discoideum (Social amoeba).